Consider the following 89-residue polypeptide: Large ribosomal subunit protein eL31 (89 aa).

The protein belongs to the eukaryotic ribosomal protein eL31 family.

This Picrophilus torridus (strain ATCC 700027 / DSM 9790 / JCM 10055 / NBRC 100828 / KAW 2/3) protein is Large ribosomal subunit protein eL31.